The sequence spans 130 residues: Small ribosomal subunit protein uS11 (130 aa).

This sequence belongs to the universal ribosomal protein uS11 family. In terms of assembly, part of the 30S ribosomal subunit. Interacts with proteins S7 and S18. Binds to IF-3.

Its function is as follows. Located on the platform of the 30S subunit, it bridges several disparate RNA helices of the 16S rRNA. Forms part of the Shine-Dalgarno cleft in the 70S ribosome. This Psychrobacter sp. (strain PRwf-1) protein is Small ribosomal subunit protein uS11.